A 319-amino-acid chain; its full sequence is Serine acetyltransferase, plasmid (319 aa).

Belongs to the transferase hexapeptide repeat family.

It localises to the cytoplasm. The catalysed reaction is L-serine + acetyl-CoA = O-acetyl-L-serine + CoA. It functions in the pathway amino-acid biosynthesis; L-cysteine biosynthesis; L-cysteine from L-serine: step 1/2. The protein is Serine acetyltransferase, plasmid (srpH) of Synechococcus elongatus (strain ATCC 33912 / PCC 7942 / FACHB-805) (Anacystis nidulans R2).